Here is a 129-residue protein sequence, read N- to C-terminus: Photosystem II reaction center Psb28 protein (129 aa).

Residues 110-129 (GLGYSNNSGNNEGADEASEG) form a disordered region.

It belongs to the Psb28 family. As to quaternary structure, part of the photosystem II complex.

The protein localises to the cellular thylakoid membrane. This is Photosystem II reaction center Psb28 protein from Synechococcus sp. (strain WH7803).